Here is a 577-residue protein sequence, read N- to C-terminus: MQHSLRSDLLPTKTSPRSHLLPQPKNANISRRILINPFKIPTLPDLTSPVPSPVKLKPTYPNLNLLQKLAATMLDKIESSIVIPMEQNRPLPKPTDPAVQLSGNFAPVNECPVQNGLEVVGQIPSCLKGVYIRNGANPMFPPLAGHHLFDGDGMIHAVSIGFDNQVSYSCRYTKTNRLVQETALGRSVFPKPIGELHGHSGLARLALFTARAGIGLVDGTRGMGVANAGVVFFNGRLLAMSEDDLPYQVKIDGQGDLETIGRFGFDDQIDSSVIAHPKVDATTGDLHTLSYNVLKKPHLRYLKFNTCGKKTRDVEITLPEPTMIHDFAITENFVVIPDQQMVFKLSEMIRGGSPVIYVKEKMARFGVLSKQDLTGSDINWVDVPDCFCFHLWNAWEERTEEGDPVIVVIGSCMSPPDTIFSESGEPTRVELSEIRLNMRTKESNRKVIVTGVNLEAGHINRSYVGRKSQFVYIAIADPWPKCSGIAKVDIQNGTVSEFNYGPSRFGGEPCFVPEGEGEEDKGYVMGFVRDEEKDESEFVVVDATDMKQVAAVRLPERVPYGFHGTFVSENQLKEQVF.

A disordered region spans residues 1–25 (MQHSLRSDLLPTKTSPRSHLLPQPK). Fe cation-binding residues include histidine 276, histidine 325, histidine 390, and histidine 563.

The protein belongs to the carotenoid oxygenase family. Fe(2+) is required as a cofactor. As to expression, expressed before fertilization in male and female gametophytes, and then immediately after pollination, restricted to seed endosperm.

It is found in the plastid. It localises to the chloroplast stroma. It carries out the reaction a 9-cis-epoxycarotenoid + O2 = a 12'-apo-carotenal + 2-cis,4-trans-xanthoxin. The enzyme catalyses 9-cis-violaxanthin + O2 = (3S,5R,6S)-5,6-epoxy-3-hydroxy-5,6-dihydro-12'-apo-beta-caroten-12'-al + 2-cis,4-trans-xanthoxin. It catalyses the reaction 9'-cis-neoxanthin + O2 = (3S,5R,6R)-3,5-dihydroxy-6,7-didehydro-5,6-dihydro-12'-apo-beta-caroten-12'-al + 2-cis,4-trans-xanthoxin. Its function is as follows. Has a 11,12(11',12') 9-cis epoxycarotenoid cleavage activity. Catalyzes the first step of abscisic-acid biosynthesis from carotenoids. Contributes probably to abscisic acid synthesis for the induction of seed dormancy. In Arabidopsis thaliana (Mouse-ear cress), this protein is 9-cis-epoxycarotenoid dioxygenase NCED6, chloroplastic (NCED6).